The sequence spans 692 residues: Elongation factor G 2 (692 aa).

The tr-type G domain maps to 8–283 (EKTRNIGIMA…SVVAYLPSPL (276 aa)). GTP-binding positions include 17–24 (AHIDAGKT), 81–85 (DTPGH), and 135–138 (NKMD).

This sequence belongs to the TRAFAC class translation factor GTPase superfamily. Classic translation factor GTPase family. EF-G/EF-2 subfamily.

It localises to the cytoplasm. Catalyzes the GTP-dependent ribosomal translocation step during translation elongation. During this step, the ribosome changes from the pre-translocational (PRE) to the post-translocational (POST) state as the newly formed A-site-bound peptidyl-tRNA and P-site-bound deacylated tRNA move to the P and E sites, respectively. Catalyzes the coordinated movement of the two tRNA molecules, the mRNA and conformational changes in the ribosome. The sequence is that of Elongation factor G 2 from Geobacter sulfurreducens (strain ATCC 51573 / DSM 12127 / PCA).